A 232-amino-acid polypeptide reads, in one-letter code: Probable transglycosylase SceD (232 aa).

Residues 1–25 (MKKLLVASSASAALFAVGVGANAHA) form the signal peptide. The segment at 84–154 (DSSAQQAPAQ…QQSADSGSNV (71 aa)) is disordered. The span at 87-148 (AQQAPAQSTT…QTQQPAQQSA (62 aa)) shows a compositional bias: low complexity.

It belongs to the transglycosylase family. SceD subfamily.

It localises to the secreted. Functionally, is able to cleave peptidoglycan and affects clumping and separation of bacterial cells. In Staphylococcus carnosus (strain TM300), this protein is Probable transglycosylase SceD (sceD).